The chain runs to 468 residues: MAGVVHVSLAALLLLPMAPAMHSDCIFKKEQAMCLEKIQRANELMGFNDSSPGCPGMWDNITCWKPAHVGEMVLVSCPELFRIFNPDQVWETETIGESDFGDSNSLDLSDMGVVSRNCTEDGWSEPFPHYFDACGFDEYESETGDQDYYYLSVKALYTVGYSTSLVTLTTAMVILCRFRKLHCTRNFIHMNLFVSFMLRAISVFIKDWILYAEQDSNHCFISTVECKAVMVFFHYCVVSNYFWLFIEGLYLFTLLVETFFPERRYFYWYTIIGWGTPTVCVTVWATLRLYFDDTGCWDMNDSTALWWVIKGPVVGSIMVNFVLFIGIIVILVQKLQSPDMGGNESSIYLRLARSTLLLIPLFGIHYTVFAFSPENVSKRERLVFELGLGSFQGFVVAVLYCFLNGEVQAEIKRKWRSWKVNRYFAVDFKHRHPSLASSGVNGGTQLSILSKSSSQIRMSGLPADNLAT.

The first 20 residues, 1-20 (MAGVVHVSLAALLLLPMAPA), serve as a signal peptide directing secretion. The Extracellular portion of the chain corresponds to 21 to 152 (MHSDCIFKKE…TGDQDYYYLS (132 aa)). Cystine bridges form between Cys-34–Cys-63, Cys-54–Cys-118, and Cys-77–Cys-134. N-linked (GlcNAc...) asparagine glycans are attached at residues Asn-48, Asn-60, and Asn-117. The segment at 125–139 (EPFPHYFDACGFDEY) is important for ADCYAP1/PACAP ligand binding and specificity. A helical transmembrane segment spans residues 153–177 (VKALYTVGYSTSLVTLTTAMVILCR). At 178–187 (FRKLHCTRNF) the chain is on the cytoplasmic side. The chain crosses the membrane as a helical span at residues 188-208 (IHMNLFVSFMLRAISVFIKDW). The Extracellular portion of the chain corresponds to 209-223 (ILYAEQDSNHCFIST). The helical transmembrane segment at 224–249 (VECKAVMVFFHYCVVSNYFWLFIEGL) threads the bilayer. A disulfide bridge links Cys-226 with Cys-296. At 250–267 (YLFTLLVETFFPERRYFY) the chain is on the cytoplasmic side. The helical transmembrane segment at 268–290 (WYTIIGWGTPTVCVTVWATLRLY) threads the bilayer. Residues 291 to 302 (FDDTGCWDMNDS) are Extracellular-facing. An N-linked (GlcNAc...) asparagine glycan is attached at Asn-300. A helical transmembrane segment spans residues 303–329 (TALWWVIKGPVVGSIMVNFVLFIGIIV). The Cytoplasmic segment spans residues 330–347 (ILVQKLQSPDMGGNESSI). A helical transmembrane segment spans residues 348 to 374 (YLRLARSTLLLIPLFGIHYTVFAFSPE). An N-linked (GlcNAc...) asparagine glycan is attached at Asn-375. Residues 375 to 379 (NVSKR) are Extracellular-facing. A helical transmembrane segment spans residues 380 to 403 (ERLVFELGLGSFQGFVVAVLYCFL). The Cytoplasmic portion of the chain corresponds to 404–468 (NGEVQAEIKR…SGLPADNLAT (65 aa)). Residues Ser-434 and Ser-447 each carry the phosphoserine modification.

This sequence belongs to the G-protein coupled receptor 2 family. Interacts with maxadilan, a vasodilator peptide from Lutzomyia longipalpis saliva; the interaction results in ADCYAP1R1 activation. As to expression, most abundant in the brain, low expression in the lung, liver, thymus, spleen, pancreas and placenta.

The protein resides in the cell membrane. Its activity is regulated as follows. Several synthetic peptides derived from maxadilan, a vasodilator peptide from Lutzomyia longipalpis saliva, act as antagonists for ADCYAP1R1. In terms of biological role, g protein-coupled receptor activated by the neuropeptide pituitary adenylate cyclase-activating polypeptide (ADCYAP1/PACAP). Binds both PACAP27 and PACAP38 bioactive peptides. Ligand binding causes a conformation change that triggers signaling via guanine nucleotide-binding proteins (G proteins) and modulates the activity of downstream effectors. Activates cAMP-dependent pathway. May regulate the release of adrenocorticotropin, luteinizing hormone, growth hormone, prolactin, epinephrine, and catecholamine. May play a role in spermatogenesis and sperm motility. Causes smooth muscle relaxation and secretion in the gastrointestinal tract. This Homo sapiens (Human) protein is Pituitary adenylate cyclase-activating polypeptide type I receptor.